The primary structure comprises 303 residues: Hemolysin E (303 aa).

Cys-87 and Cys-285 are joined by a disulfide. A helical membrane pass occupies residues 179–199 (AGAAAGIVAGPFGLIISYSIA).

Belongs to the hemolysin E family. In terms of assembly, monomer and oligomer. In periplasm, it is present as a monomer, while in outer membrane vesicles, it oligomerizes to form a pore structure that is active. The pore is formed by a dodecamer. In terms of processing, in periplasm, it forms a disulfide bond, which prevents the oligomerization. In outer membrane vesicles, the redox status prevents formation of the disulfide bond, leading to oligomerization and pore formation.

It localises to the secreted. The protein localises to the periplasm. The protein resides in the host cell membrane. Its function is as follows. Toxin, which has some hemolytic activity towards mammalian cells. Acts by forming a pore-like structure upon contact with mammalian cells. The sequence is that of Hemolysin E (hlyE) from Salmonella paratyphi A (strain ATCC 9150 / SARB42).